The chain runs to 96 residues: MLMMDTLYDWLIDGFTWLVIKLGIMWIESKIFVIQFFWEMSQKVIDMFTIYPLIQQAIDMLPPQYSGFLFFLGLDQALAIVLQALMTRFALRALNL.

The chain crosses the membrane as a helical span at residues 76 to 96 (QALAIVLQALMTRFALRALNL).

It localises to the secreted. The protein localises to the host cell membrane. In terms of biological role, increases short-circuit current in rabbit ileal tissue mounted in Ussing chambers, by increasing the potential difference. Cultures of V.cholerae containing the cloned ace gene cause fluid secretion in ligated rabbit ileal loops. The chain is Accessory cholera enterotoxin (ace) from Vibrio cholerae serotype O1 (strain ATCC 39315 / El Tor Inaba N16961).